The primary structure comprises 281 residues: Shikimate dehydrogenase (NADP(+)) (281 aa).

Residues 15-17 (SKS) and threonine 62 each bind shikimate. Lysine 66 (proton acceptor) is an active-site residue. Shikimate contacts are provided by asparagine 87 and aspartate 102. NADP(+)-binding positions include 127–131 (GAGGS), 151–156 (NRTPER), and leucine 217. Tyrosine 219 is a shikimate binding site. Glycine 241 provides a ligand contact to NADP(+).

Belongs to the shikimate dehydrogenase family. Homodimer.

The catalysed reaction is shikimate + NADP(+) = 3-dehydroshikimate + NADPH + H(+). Its pathway is metabolic intermediate biosynthesis; chorismate biosynthesis; chorismate from D-erythrose 4-phosphate and phosphoenolpyruvate: step 4/7. Involved in the biosynthesis of the chorismate, which leads to the biosynthesis of aromatic amino acids. Catalyzes the reversible NADPH linked reduction of 3-dehydroshikimate (DHSA) to yield shikimate (SA). In Stenotrophomonas maltophilia (strain R551-3), this protein is Shikimate dehydrogenase (NADP(+)).